The sequence spans 298 residues: HTH-type transcriptional regulator CzcR (298 aa).

The region spanning 11 to 68 (MELRDLQIFQSVADQGSVSSAAKELNYVQSNVTARIKQLENELKTPLFYRHKRGMTLT) is the HTH lysR-type domain. The segment at residues 28-47 (VSSAAKELNYVQSNVTARIK) is a DNA-binding region (H-T-H motif).

This sequence belongs to the LysR transcriptional regulatory family.

The chain is HTH-type transcriptional regulator CzcR (czcR) from Bacillus thuringiensis (strain Al Hakam).